Consider the following 1483-residue polypeptide: Cystic fibrosis transmembrane conductance regulator (1483 aa).

Over 1-77 (MQRSPLEKAS…KLINALRRCF (77 aa)) the chain is Cytoplasmic. The helical transmembrane segment at 78 to 98 (FWRFAFYGILLYLGEVTKAVQ) threads the bilayer. The ABC transmembrane type-1 1 domain occupies 81-365 (FAFYGILLYL…WAVQTWYDSL (285 aa)). Topologically, residues 99–122 (PLLLGRIIASYDPDNKQERSIAIY) are extracellular. A helical transmembrane segment spans residues 123–146 (LAIGLCLLFIMRPLLLHPAIFGLH). Residues 147 to 195 (HIGMQIRIAMFSLIYKKTLKLSSRVLDKISIGQLVSLLSNNLNKFDEGL) lie on the Cytoplasmic side of the membrane. Residues 196-216 (ALAHFVWIAPLQVTLLMGLLW) form a helical membrane-spanning segment. The Extracellular portion of the chain corresponds to 217–222 (DLLQAS). The chain crosses the membrane as a helical span at residues 223–243 (AFCGLAFLIVLALVQAGLGRM). Over 244-298 (IMKYRDQRAGKINERLVITSEVIENIQSVKAYCWEEAMEKIIENIRQTELKLTRK) the chain is Cytoplasmic. A helical transmembrane segment spans residues 299 to 319 (AAHVRYFNSSAFFFSGFFVVS). The Extracellular segment spans residues 320 to 339 (LSVLPYALIKTIILRKIFTT). Residues 340 to 358 (ISFCIVLRMAVTRQFPWAV) traverse the membrane as a helical segment. The Cytoplasmic segment spans residues 359 to 859 (QTWYDSLGAI…YLRYITVHKN (501 aa)). ATP-binding positions include tryptophan 401, serine 434, 458–465 (GSTGAGKT), and glutamine 493. The ABC transporter 1 domain maps to 423-646 (NGDNSLFFSN…RPDFSSKLMG (224 aa)). Cysteine 524 is lipidated: S-palmitoyl cysteine. Phosphoserine occurs at positions 549 and 660. The interval 654–832 (SPERRNSIIT…EEINEEDLKE (179 aa)) is disordered R region. Serine 670 is subject to Phosphoserine; by PKA. Serine 686 carries the post-translational modification Phosphoserine. Lysine 688 is covalently cross-linked (Glycyl lysine isopeptide (Lys-Gly) (interchain with G-Cter in ubiquitin)). Serine 700 and serine 712 each carry phosphoserine. Position 717 is a phosphothreonine (threonine 717). Phosphoserine occurs at positions 737, 768, 791, 796, and 814. A helical membrane pass occupies residues 860–880 (LIFVLIWCLVIFLAEVAVSLV). Residues 860-1156 (LIFVLIWCLV…AVNSSIEVDS (297 aa)) form the ABC transmembrane type-1 2 domain. Over 881-919 (VLWILRNLSSQDKGNSTQSVNSSYAVIFTSTSAYYIFYI) the chain is Extracellular. N-linked (GlcNAc...) asparagine glycosylation is found at asparagine 887, asparagine 895, and asparagine 901. A discontinuously helical transmembrane segment spans residues 920–940 (YVGVADTLLALGLFRGLPLVH). The Cytoplasmic segment spans residues 941-991 (TLITVSKILHHKMLHSVLQAPMSTLNTLKAGGILNRFSKDIAILDDLLPLT). Residues 992-1012 (IFDFIQLLLIVIGAVAVVSVL) form a helical membrane-spanning segment. The Extracellular portion of the chain corresponds to 1013 to 1014 (QP). The helical transmembrane segment at 1015 to 1035 (YIFLATVPVIAAFIILRAYFL) threads the bilayer. Residues 1036–1096 (HTSQQLKQLE…TANWFLYLST (61 aa)) lie on the Cytoplasmic side of the membrane. A helical transmembrane segment spans residues 1097 to 1117 (LRWFQMRMEIIFVIFFIAVTF). Residues 1118 to 1131 (ISILTTGEGEGTVG) are Extracellular-facing. Residues 1132–1152 (IILTLAMNIMGTLQWAVNSSI) form a helical membrane-spanning segment. Over 1153–1483 (EVDSLMRSVS…TEDEVQDTRL (331 aa)) the chain is Cytoplasmic. An ABC transporter 2 domain is found at 1213 to 1446 (MTVKDLTAKY…RSAFRQAIGP (234 aa)). ATP contacts are provided by residues tyrosine 1222 and 1247–1254 (GRTGSGKS). Residues 1389-1483 (RTLKQAFADC…TEDEVQDTRL (95 aa)) form an interaction with GORASP2 region. Cysteine 1398 is lipidated: S-palmitoyl cysteine. The interval 1444 to 1483 (IGPPERPGLLPHRLSSRQRSPSRIAALKEETEDEVQDTRL) is disordered. Serine 1459 is subject to Phosphoserine. Residues 1473-1483 (ETEDEVQDTRL) show a composition bias toward acidic residues. A PDZ-binding motif is present at residues 1481-1483 (TRL).

This sequence belongs to the ABC transporter superfamily. ABCC family. CFTR transporter (TC 3.A.1.202) subfamily. Monomer; does not require oligomerization for channel activity. May form oligomers in the membrane. Interacts with SLC26A3, SLC26A6 and NHERF1. Interacts with SHANK2. Interacts with MYO6. Interacts (via C-terminus) with GOPC (via PDZ domain); this promotes CFTR internalization and thereby decreases channel activity. Interacts with SLC4A7 through NHERF1. Found in a complex with MYO5B and RAB11A. Interacts with ANO1. Interacts with SLC26A8. Interacts with AHCYL1; the interaction increases CFTR activity. Interacts with CSE1L. The core-glycosylated form interacts with GORASP2 (via PDZ GRASP-type 1 domain) in respone to ER stress. Interacts with MARCHF2; the interaction leads to CFTR ubiqtuitination and degradation. Interacts with ADGRG2. In terms of processing, N-glycosylated. Phosphorylated; cAMP treatment promotes phosphorylation and activates the channel. Dephosphorylation decreases the ATPase activity (in vitro). Phosphorylation at PKA sites activates the channel. Phosphorylation at PKC sites enhances the response to phosphorylation by PKA. Phosphorylated by AMPK; this inhibits channel activity. Post-translationally, ubiquitinated, leading to its degradation in the lysosome. Deubiquitination by USP10 in early endosomes enhances its endocytic recycling to the cell membrane. Ubiquitinated by RNF185 during ER stress. Ubiquitinated by MARCHF2.

The protein localises to the apical cell membrane. Its subcellular location is the early endosome membrane. It localises to the cell membrane. It is found in the recycling endosome membrane. The protein resides in the endoplasmic reticulum membrane. The protein localises to the nucleus. It catalyses the reaction ATP + H2O + closed Cl(-) channel = ADP + phosphate + open Cl(-) channel.. The enzyme catalyses chloride(in) = chloride(out). The catalysed reaction is hydrogencarbonate(in) = hydrogencarbonate(out). It carries out the reaction ATP + H2O = ADP + phosphate + H(+). In terms of biological role, epithelial ion channel that plays an important role in the regulation of epithelial ion and water transport and fluid homeostasis. Mediates the transport of chloride ions across the cell membrane. Possesses an intrinsic ATPase activity and utilizes ATP to gate its channel; the passive flow of anions through the channel is gated by cycles of ATP binding and hydrolysis by the ATP-binding domains. The ion channel is also permeable to HCO(3)(-); selectivity depends on the extracellular chloride concentration. Exerts its function also by modulating the activity of other ion channels and transporters. Contributes to the regulation of the pH and the ion content of the epithelial fluid layer. Modulates the activity of the epithelial sodium channel (ENaC) complex, in part by regulating the cell surface expression of the ENaC complex. May regulate bicarbonate secretion and salvage in epithelial cells by regulating the transporter SLC4A7. Can inhibit the chloride channel activity of ANO1. Plays a role in the chloride and bicarbonate homeostasis during sperm epididymal maturation and capacitation. This is Cystic fibrosis transmembrane conductance regulator from Canis lupus familiaris (Dog).